A 332-amino-acid polypeptide reads, in one-letter code: L-lactate dehydrogenase A chain (332 aa).

Residues 29–57 and R99 contribute to the NAD(+) site; that span reads GMVG…MEDK. Residues R106, N138, and R169 each contribute to the substrate site. N138 lines the NAD(+) pocket. H193 serves as the catalytic Proton acceptor. T248 is a binding site for substrate.

This sequence belongs to the LDH/MDH superfamily. LDH family. In terms of assembly, homotetramer.

The protein resides in the cytoplasm. It carries out the reaction (S)-lactate + NAD(+) = pyruvate + NADH + H(+). Its pathway is fermentation; pyruvate fermentation to lactate; (S)-lactate from pyruvate: step 1/1. Interconverts simultaneously and stereospecifically pyruvate and lactate with concomitant interconversion of NADH and NAD(+). This Eleginops maclovinus (Patagonian blennie) protein is L-lactate dehydrogenase A chain (ldha).